The primary structure comprises 512 residues: RCC1 domain-containing protein DDB_G0279253 (512 aa).

RCC1 repeat units follow at residues 1 to 56 (MKIY…MIID), 58 to 134 (GDLY…ACDN), 135 to 185 (NGNI…NNNN), 197 to 248 (SGGV…ALSS), 249 to 319 (ENDV…LLDI), 321 to 384 (FKNV…LLTN), 386 to 443 (DKLY…IQVY), and 454 to 512 (NNNI…FILP). Residues 66 to 77 (NDSGQLGINSNE) show a composition bias toward polar residues. Disordered regions lie at residues 66-85 (NDSG…QQQQ) and 162-200 (STSN…SGGV). The span at 162 to 196 (STSNNKNNNNNNNNNNNNNNNNNNNNNNNNNNNNN) shows a compositional bias: low complexity.

This chain is RCC1 domain-containing protein DDB_G0279253, found in Dictyostelium discoideum (Social amoeba).